Consider the following 610-residue polypeptide: UvrABC system protein C (610 aa).

A GIY-YIG domain is found at 16 to 94 (SQPGVYRMYD…IKLYQPRYNV (79 aa)). The UVR domain occupies 204-239 (DQVLTQLIARMEKASQDLAFEEAARIRDQIQAVRRV).

The protein belongs to the UvrC family. In terms of assembly, interacts with UvrB in an incision complex.

The protein localises to the cytoplasm. The UvrABC repair system catalyzes the recognition and processing of DNA lesions. UvrC both incises the 5' and 3' sides of the lesion. The N-terminal half is responsible for the 3' incision and the C-terminal half is responsible for the 5' incision. This is UvrABC system protein C from Salmonella paratyphi C (strain RKS4594).